Here is a 61-residue protein sequence, read N- to C-terminus: Potassium channel toxin alpha-KTx 6.8 (61 aa).

Positions 1 to 23 are cleaved as a signal peptide; sequence MNAKFILLLLVVTTTILLPDTQG. 4 disulfides stabilise this stretch: cysteine 29–cysteine 50, cysteine 35–cysteine 55, cysteine 39–cysteine 57, and cysteine 45–cysteine 60. Cysteine amide is present on cysteine 60.

Belongs to the short scorpion toxin superfamily. Potassium channel inhibitor family. Alpha-KTx 06 subfamily. Expressed by the venom gland.

The protein localises to the secreted. Functionally, blocker of voltage-gated potassium channels. In Opistophthalmus carinatus (African yellow leg scorpion), this protein is Potassium channel toxin alpha-KTx 6.8.